We begin with the raw amino-acid sequence, 581 residues long: Protein phosphatase 2C 70 (581 aa).

Residues 1 to 7 (MAMIGMN) are Extracellular-facing. The chain crosses the membrane as a helical span at residues 8–28 (IIGLFMVLMLLLISLIILFAC). The Cytoplasmic segment spans residues 29–581 (KPWRYFSRFR…IIYLDFDTSL (553 aa)). Residues 208–259 (VKLGRVSPSDLALKDSEVSGKHAQITWNSTKFKWELVDMGSLNGTLVNSHSI) enclose the FHA domain. One can recognise a PPM-type phosphatase domain in the interval 304–577 (KIGVASDPMA…DNTSIIYLDF (274 aa)). 4 residues coordinate Mn(2+): D346, G347, D521, and D568.

As to quaternary structure, association of RLK5 with kapp domain is dependent on phosphorylation of RLK5 and can be abolished by dephosphorylation. Interacts with SERK1 and CDC48A. Component of the SERK1 signaling complex, composed of KAPP, CDC48A, GRF6 or GRF7, SERK1, SERK2, SERK3/BAK1 and BRI1. Interacts with CLV1. It depends on Mg(2+) as a cofactor. Mn(2+) is required as a cofactor. In terms of tissue distribution, expressed in all tissues examined.

It localises to the cell membrane. It catalyses the reaction O-phospho-L-seryl-[protein] + H2O = L-seryl-[protein] + phosphate. It carries out the reaction O-phospho-L-threonyl-[protein] + H2O = L-threonyl-[protein] + phosphate. Its function is as follows. Dephosphorylates the Ser/Thr receptor-like kinase RLK5. May function as a signaling component in a pathway involving RLK5. Binds and dephosphorylates CLAVATA1 (CLV1). Functions as a negative regulator of the CLV1 signaling in plant development. Dephosphorylates SERK1 receptor kinase on threonine residues in the A-loop. Dephosphorylation of SERK1 controls SERK1 internalization. Component of a signaling pathway which mediates adaptation to NaCl stress. Is not a component of the SALT OVERLY SENSITIVE (SOS) pathway. The protein is Protein phosphatase 2C 70 of Arabidopsis thaliana (Mouse-ear cress).